A 43-amino-acid polypeptide reads, in one-letter code: uncharacterized protein (43 aa).

Polar residues-rich tracts occupy residues 1–19 (MSQK…SGAS) and 33–43 (PENSISKTFSK). The tract at residues 1-43 (MSQKLSFFQQNTRNGSGASRTLVIKPPTIQPKPENSISKTFSK) is disordered.

This is an uncharacterized protein from Dictyostelium discoideum (Social amoeba).